The following is a 452-amino-acid chain: Eukaryotic translation initiation factor 4B3 (452 aa).

N-acetylalanine is present on Ala2. Residues 20 to 282 (EEHEAELKQQ…PSGGSRPRLV (263 aa)) form a disordered region. The segment covering 28–37 (QQPSPTNQKS) has biased composition (polar residues). Positions 98-110 (PRERSAEELDRSK) are enriched in basic and acidic residues. Gly residues predominate over residues 111–122 (LGGGFRSYGGGR). A compositionally biased stretch (low complexity) spans 126–136 (ESSSSRWGSSR). A compositionally biased stretch (basic and acidic residues) spans 137–156 (VSEDGERRGGGFNRDREPSR). 2 short sequence motifs (nuclear localization signal) span residues 172 to 179 (AKKPISGN) and 215 to 222 (PRRFVSSN). The segment covering 227 to 243 (DRFEKRGSFESLSRNRD) has biased composition (basic and acidic residues). Residues Ser234, Ser270, and Ser300 each carry the phosphoserine modification. Residues 265–280 (GAANGSPPPSGGSRPR) show a composition bias toward low complexity. Residues 349 to 452 (AAMEKPNEKS…AKKEETEDKI (104 aa)) form a disordered region. A compositionally biased stretch (basic and acidic residues) spans 369–386 (GRKDEERIERSWRKSTEH). The span at 387 to 397 (SEEDAQEEEPA) shows a compositional bias: acidic residues. Basic and acidic residues-rich tracts occupy residues 400 to 419 (GAKK…KKEE) and 441 to 452 (EEAKKEETEDKI).

Belongs to the eIF-4 subunit B family. In terms of assembly, homodimer. Nonspherical monomer. mRNA-discriminating component of initiation complexes. Interacts with MAD2. Phosphorylated.

The protein localises to the nucleus. Functionally, promotes the eIF4F and eIF4A RNA-dependent ATP-hydrolysis activity with different efficiency depending on mRNAs, thus providing mRNA discrimination during initiation of translation. This Arabidopsis thaliana (Mouse-ear cress) protein is Eukaryotic translation initiation factor 4B3.